A 173-amino-acid polypeptide reads, in one-letter code: Large ribosomal subunit protein uL10 (173 aa).

The protein belongs to the universal ribosomal protein uL10 family. Part of the ribosomal stalk of the 50S ribosomal subunit. The N-terminus interacts with L11 and the large rRNA to form the base of the stalk. The C-terminus forms an elongated spine to which L12 dimers bind in a sequential fashion forming a multimeric L10(L12)X complex.

Functionally, forms part of the ribosomal stalk, playing a central role in the interaction of the ribosome with GTP-bound translation factors. This is Large ribosomal subunit protein uL10 from Beutenbergia cavernae (strain ATCC BAA-8 / DSM 12333 / CCUG 43141 / JCM 11478 / NBRC 16432 / NCIMB 13614 / HKI 0122).